The primary structure comprises 98 residues: YcgL domain-containing protein Ping_1076 (98 aa).

Residues 1-85 enclose the YcgL domain; that stretch reads MLCAVYKSIR…PPVNHLQEHK (85 aa). Residues 75–98 are disordered; sequence PPPVNHLQEHKDWKKKRQENKNEI.

In Psychromonas ingrahamii (strain DSM 17664 / CCUG 51855 / 37), this protein is YcgL domain-containing protein Ping_1076.